The following is a 48-amino-acid chain: Cathepsin B (48 aa).

The protein belongs to the peptidase C1 family. Dimer of a heavy chain and a light chain cross-linked by a disulfide bond.

Its subcellular location is the lysosome. The catalysed reaction is Hydrolysis of proteins with broad specificity for peptide bonds. Preferentially cleaves -Arg-Arg-|-Xaa bonds in small molecule substrates (thus differing from cathepsin L). In addition to being an endopeptidase, shows peptidyl-dipeptidase activity, liberating C-terminal dipeptides.. In terms of biological role, thiol protease which is believed to participate in intracellular degradation and turnover of proteins. Has also been implicated in tumor invasion and metastasis. In Coturnix japonica (Japanese quail), this protein is Cathepsin B (CTSB).